A 440-amino-acid polypeptide reads, in one-letter code: Gamma-aminobutyric acid receptor subunit pi (440 aa).

An N-terminal signal peptide occupies residues 1–23 (MSYSLYLAFVCLNLLAQRMCIQG). Residues 24–241 (NQFNVEVSRS…LVLQFELRRN (218 aa)) lie on the Extracellular side of the membrane. N-linked (GlcNAc...) asparagine glycosylation is found at N43, N102, and N145. A disulfide bridge links C160 with C174. Residues N196 and N228 are each glycosylated (N-linked (GlcNAc...) asparagine). A helical membrane pass occupies residues 242–262 (VLYFILETYVPSTFLVVLSWV). Topologically, residues 263-270 (SFWISLES) are cytoplasmic. Residues 271-290 (VPARTCIGVTTVLSMTTLMI) traverse the membrane as a helical segment. At 291 to 301 (GSRTSLPNTNC) the chain is on the extracellular side. A helical transmembrane segment spans residues 302–322 (FIKAIDVYLGICFSFVFGALL). Over 323–419 (EYAVAHYSSL…NPSNVDRYSK (97 aa)) the chain is Cytoplasmic. Residues 420–440 (LLFPLIFMLANVFYWAYYMYF) traverse the membrane as a helical segment.

This sequence belongs to the ligand-gated ion channel (TC 1.A.9) family. Gamma-aminobutyric acid receptor (TC 1.A.9.5) subfamily. GABRP sub-subfamily. As to quaternary structure, heteropentamer, formed by a combination of alpha (GABRA1-6), beta (GABRB1-3), gamma (GABRG1-3), delta (GABRD), epsilon (GABRE), rho (GABRR1-3), pi (GABRP) and theta (GABRQ) chains, each subunit exhibiting distinct physiological and pharmacological properties. As to expression, expressed in lungs, in alveolar epithelium.

Its subcellular location is the cell membrane. The protein localises to the apical cell membrane. It carries out the reaction chloride(in) = chloride(out). In terms of biological role, pi subunit of the heteropentameric ligand-gated chloride channel gated by gamma-aminobutyric acid (GABA). GABA-gated chloride channels, also named GABA(A) receptors (GABAAR), consist of five subunits arranged around a central pore and contain GABA active binding site(s) located at the alpha and beta subunit interfaces. When activated by GABA, GABAARs selectively allow the flow of chloride anions across the cell membrane down their electrochemical gradient. Pi-containing GABAARs are mostly located in peripheral tissues. In the uterus, pi subunits modulate uterus contraction by altering the sensitivity of GABAARs to pregnanolone. In the lungs, pi-containing GABAARs contribute to pulmonary fluid transport via luminal secretion of chloride. The polypeptide is Gamma-aminobutyric acid receptor subunit pi (Rattus norvegicus (Rat)).